The chain runs to 566 residues: Folate-like transporter DDB_G0272544 (566 aa).

The stretch at 24–81 forms a coiled coil; it reads RNQDEDENENENNDNLENDNNKRNYISINNYEPYKEIDNNNNKNNNNNNIINNNNKIN. Residues 25–46 form a disordered region; it reads NQDEDENENENNDNLENDNNKR. The span at 27 to 40 shows a compositional bias: acidic residues; sequence DEDENENENNDNLE. 11 helical membrane-spanning segments follow: residues 148-168, 171-191, 194-214, 226-246, 252-272, 304-324, 332-352, 364-384, 388-408, 420-440, and 458-478; these read VFLL…IIII, VAKI…WMIL, ITEG…YFSL, VNAG…LLVE, VYLL…ALGF, IWSG…QNLF, SWNG…AIIP, GIIL…MGFG, VVSA…SPIV, IGVL…LVQS, and YGAC…FLFL. A coiled-coil region spans residues 517–544; sequence YNANIIDFENNNNNNNNNNNNNNNNNNN. Residues 526–556 are compositionally biased toward low complexity; that stretch reads NNNNNNNNNNNNNNNNNNNNNNNNNNNNNNN. The tract at residues 526–566 is disordered; the sequence is NNNNNNNNNNNNNNNNNNNNNNNNNNNNNNNVGIGGNDNFK.

This sequence belongs to the reduced folate carrier (RFC) transporter (TC 2.A.48) family.

The protein localises to the membrane. Its function is as follows. Folate transporter. The chain is Folate-like transporter DDB_G0272544 from Dictyostelium discoideum (Social amoeba).